The sequence spans 57 residues: Kunitz-type serine protease inhibitor 2 (57 aa).

The region spanning 5-55 (CELPAETGLCKARIRSFHYNRAAQQCLEFIYGGCGGNANRFKTIDECHRTC) is the BPTI/Kunitz inhibitor domain. 3 cysteine pairs are disulfide-bonded: C5/C55, C14/C38, and C30/C51.

This sequence belongs to the venom Kunitz-type family. As to expression, expressed by the venom gland.

The protein localises to the secreted. Functionally, serine protease inhibitor. This Naja nivea (Cape cobra) protein is Kunitz-type serine protease inhibitor 2.